Consider the following 980-residue polypeptide: Alanine--tRNA ligase, mitochondrial (980 aa).

A mitochondrion-targeting transit peptide spans 1–23 (MAVALAAAAGKLRRAIGRSCPWQ). ATP is bound by residues Arg-105, His-123, Trp-205, and 235–237 (LWN). Positions 237 and 260 each coordinate L-alanine. Gly-264 lines the ATP pocket. His-627, His-631, Cys-744, and His-748 together coordinate Zn(2+).

The protein belongs to the class-II aminoacyl-tRNA synthetase family. In terms of assembly, monomer. Requires Zn(2+) as cofactor.

It is found in the mitochondrion. It catalyses the reaction tRNA(Ala) + L-alanine + ATP = L-alanyl-tRNA(Ala) + AMP + diphosphate. The catalysed reaction is (S)-lactate + ATP + H(+) = (S)-lactoyl-AMP + diphosphate. The enzyme catalyses (S)-lactoyl-AMP + L-lysyl-[protein] = N(6)-[(S)-lactoyl]-L-lysyl-[protein] + AMP + 2 H(+). Its function is as follows. Catalyzes the attachment of alanine to tRNA(Ala) in a two-step reaction: alanine is first activated by ATP to form Ala-AMP and then transferred to the acceptor end of tRNA(Ala). Also edits incorrectly charged tRNA(Ala) via its editing domain. In presence of high levels of lactate, also acts as a protein lactyltransferase that mediates lactylation of lysine residues in target proteins, such as CGAS. Acts as an inhibitor of cGAS/STING signaling by catalyzing lactylation of CGAS, preventing the formation of liquid-like droplets in which CGAS is activated. The protein is Alanine--tRNA ligase, mitochondrial (Aars2) of Mus musculus (Mouse).